Reading from the N-terminus, the 298-residue chain is N-acetylmuramic acid 6-phosphate etherase (298 aa).

Residues 55–218 (IHAQVSGGGR…STGLMIKSGK (164 aa)) form the SIS domain. Glutamate 83 acts as the Proton donor in catalysis. Residue glutamate 114 is part of the active site.

Belongs to the GCKR-like family. MurNAc-6-P etherase subfamily. Homodimer.

It carries out the reaction N-acetyl-D-muramate 6-phosphate + H2O = N-acetyl-D-glucosamine 6-phosphate + (R)-lactate. The protein operates within amino-sugar metabolism; 1,6-anhydro-N-acetylmuramate degradation. It participates in amino-sugar metabolism; N-acetylmuramate degradation. It functions in the pathway cell wall biogenesis; peptidoglycan recycling. Its function is as follows. Specifically catalyzes the cleavage of the D-lactyl ether substituent of MurNAc 6-phosphate, producing GlcNAc 6-phosphate and D-lactate. Together with AnmK, is also required for the utilization of anhydro-N-acetylmuramic acid (anhMurNAc) either imported from the medium or derived from its own cell wall murein, and thus plays a role in cell wall recycling. The sequence is that of N-acetylmuramic acid 6-phosphate etherase from Escherichia coli O81 (strain ED1a).